Consider the following 425-residue polypeptide: uncharacterized protein (425 aa).

Residues 55–181 (RYAHSLGVYE…DLDTDRMDYL (127 aa)) form the HD domain.

This is an uncharacterized protein from Mycoplasma genitalium (strain ATCC 33530 / DSM 19775 / NCTC 10195 / G37) (Mycoplasmoides genitalium).